The primary structure comprises 338 residues: MSVTGLPFDDFRTLLRDLPGPDPRALVAARERDAQLTKPPGALGRLEEIAFWLAAWTGRAPAVTRPLVAIFAGNHGVTKQGITPFPPSVTQQMVENFAAGGAAINQICVTYDLGLKVFDLALDYPTGDITEEPALSERDCAATMAFGMEAIAGGTDLLCIGEMGIGNTTIAAAIHYALYGGTAAEWVGPGTGSEGEMLKRKIAAVEKAAALHREHLSDPLEVLRRLGGREIAAMAGAILAARMERIPVIIDGYVATAAASILKAANPSALDHCLIGHVSAEPGHLKAIDKLGKTPLLALGMRLGEGTGAALAAGIVKAAAACHSGMATFESAGVTNKH.

E305 serves as the catalytic Proton acceptor.

The protein belongs to the CobT family.

It carries out the reaction 5,6-dimethylbenzimidazole + nicotinate beta-D-ribonucleotide = alpha-ribazole 5'-phosphate + nicotinate + H(+). It participates in nucleoside biosynthesis; alpha-ribazole biosynthesis; alpha-ribazole from 5,6-dimethylbenzimidazole: step 1/2. Catalyzes the synthesis of alpha-ribazole-5'-phosphate from nicotinate mononucleotide (NAMN) and 5,6-dimethylbenzimidazole (DMB). In Rhizobium rhizogenes (strain K84 / ATCC BAA-868) (Agrobacterium radiobacter), this protein is Nicotinate-nucleotide--dimethylbenzimidazole phosphoribosyltransferase.